The primary structure comprises 248 residues: Triosephosphate isomerase (248 aa).

Residues N11 and K13 each coordinate substrate. The active-site Electrophile is the H95. The active-site Proton acceptor is the E165.

The protein belongs to the triosephosphate isomerase family. Homodimer.

It is found in the cytoplasm. It catalyses the reaction dihydroxyacetone phosphate = methylglyoxal + phosphate. It carries out the reaction D-glyceraldehyde 3-phosphate = dihydroxyacetone phosphate. It functions in the pathway carbohydrate degradation; glycolysis; D-glyceraldehyde 3-phosphate from glycerone phosphate: step 1/1. The protein operates within carbohydrate biosynthesis; gluconeogenesis. Functionally, triosephosphate isomerase is an extremely efficient metabolic enzyme that catalyzes the interconversion between dihydroxyacetone phosphate (DHAP) and D-glyceraldehyde-3-phosphate (G3P) in glycolysis and gluconeogenesis. It is also responsible for the non-negligible production of methylglyoxal a reactive cytotoxic side-product that modifies and can alter proteins, DNA and lipids. The polypeptide is Triosephosphate isomerase (tpi1) (Xenopus tropicalis (Western clawed frog)).